We begin with the raw amino-acid sequence, 1461 residues long: Periaxin (1461 aa).

Ser7 is modified (phosphoserine). Positions 16-99 (LVEIIVETEA…YKVSFCLKRT (84 aa)) constitute a PDZ domain. Residues 70-84 (VFFENFKYEDALRLL) carry the Nuclear export signal motif. The Nuclear localization signal signature appears at 118-196 (KGPRAKVAKL…RLQLPRLRVR (79 aa)). The residue at position 133 (Ser133) is a Phosphoserine. 55 tandem repeats follow at residues 431–435 (GPEVK), 439–443 (GPEVK), 447–451 (APEVK), 455–459 (VPEAA), 463–467 (VRLPE), 468–472 (VELPK), 473–477 (VSEMK), 481–485 (VPEMA), 486–490 (VPEVR), 494–498 (VELPK), 499–503 (VSEMK), 507–511 (VPEMA), 512–516 (VPEVR), 520–524 (VQLLK), 525–529 (VSEMK), 533–537 (VPEMA), 538–542 (VPEVR), 546–550 (VQLPK), 551–555 (VSEMK), 559–563 (VSEVA), 564–568 (VPEVR), 572–576 (VQLPK), 577–581 (VPEMK), 582–586 (VPEMK), 590–594 (VPEMK), 595–599 (LPEMK), 600–604 (LPEVQ), 608–612 (VPEMA), 613–617 (VPDVH), 618–622 (LPEVQ), 626–630 (VPEMK), 631–635 (LPEMK), 636–640 (LPEVK), 644–648 (VPEMA), 649–653 (VPDVH), 654–658 (LPEVQ), 662–666 (VPEMK), 670–674 (MPEMA), 675–679 (VPEVR), 683–687 (VQLPK), 688–692 (VSEMK), 696–700 (VPEMA), 701–705 (VPDVH), 706–710 (LPEVQ), 714–718 (VCEMK), 719–723 (VPDMK), 724–728 (LPEIK), 732–736 (VPEMA), 737–741 (VPDVH), 742–746 (LPEVQ), 750–754 (VSEIR), 755–759 (LPEMQ), 760–764 (VPKVP), 771–775 (APEVK), and 779–783 (APEVQ). The 55 X 5 AA approximate tandem repeats of [LVMAG]-[PSREQC]-[EDKL]-[LIVMAP]-[AQKHRPE]; that may have a tripeptide spacer of [LV]-P-[KER] stretch occupies residues 431-783 (GPEVKVPKGP…VKLPRAPEVQ (353 aa)). Phosphoserine is present on residues Ser900 and Ser1082. Residues 1318-1327 (EGAEEGEKAK) are compositionally biased toward basic and acidic residues. Positions 1318–1461 (EGAEEGEKAK…RMEGAQAAAV (144 aa)) are disordered. Phosphoserine is present on residues Ser1349, Ser1351, Ser1363, Ser1401, Ser1407, and Ser1439. The segment covering 1352–1363 (PEEEEEEEEEGS) has biased composition (acidic residues).

The protein belongs to the periaxin family. Homodimer (via PDZ domain). Interacts with SCN10A. Found in a complex with SCN10A. Interacts with DRP2. Identified in a dystroglycan complex that contains at least PRX, DRP2, UTRN, DMD and DAG1. Detected in a complex composed of at least EZR, AHNAK, PPL and PRX. Identified in a complex with EZR, AHNAK, BFSP1, BFSP2, ANK2, PLEC, VIM and spectrin. In terms of tissue distribution, detected in spinal cord. Isoform 1 and isoform 2 are found in sciatic nerve and Schwann cells.

It is found in the cell membrane. The protein resides in the nucleus. The protein localises to the cytoplasm. It localises to the cell junction. Its function is as follows. Scaffolding protein that functions as part of a dystroglycan complex in Schwann cells, and as part of EZR and AHNAK-containing complexes in eye lens fiber cells. Required for the maintenance of the peripheral myelin sheath that is essential for normal transmission of nerve impulses and normal perception of sensory stimuli. Required for normal transport of MBP mRNA from the perinuclear to the paranodal regions. Required for normal remyelination after nerve injury. Required for normal elongation of Schwann cells and normal length of the internodes between the nodes of Ranvier. The demyelinated nodes of Ranvier permit saltatory transmission of nerve impulses; shorter internodes cause slower transmission of nerve impulses. Required for the formation of appositions between the abaxonal surface of the myelin sheath and the Schwann cell plasma membrane; the Schwann cell cytoplasm is restricted to regions between these appositions. Required for the formation of Cajal bands and of Schmidt-Lanterman incisures that correspond to short, cytoplasm-filled regions on myelinated nerves. Recruits DRP2 to the Schwann cell plasma membrane. Required for normal protein composition of the eye lens fiber cell plasma membrane and normal eye lens fiber cell morphology. This chain is Periaxin (PRX), found in Homo sapiens (Human).